Reading from the N-terminus, the 76-residue chain is DNA polymerase III subunit theta (76 aa).

In terms of assembly, the DNA polymerase holoenzyme is a complex that contains 10 different types of subunits. These subunits are organized into 3 functionally essential subassemblies: the pol III core, the beta sliding clamp processivity factor and the clamp-loading complex. The pol III core (subunits alpha,epsilon and theta) contains the polymerase and the 3'-5' exonuclease proofreading activities. The polymerase is tethered to the template via the sliding clamp processivity factor. The clamp-loading complex assembles the beta processivity factor onto the primer template and plays a central role in the organization and communication at the replication fork. This complex contains delta, delta', psi and chi, and copies of either or both of two different DnaX proteins, gamma and tau. The composition of the holoenzyme is, therefore: (alpha,epsilon,theta)[2]-(gamma/tau)[3]-delta,delta', psi,chi-beta[4].

The catalysed reaction is DNA(n) + a 2'-deoxyribonucleoside 5'-triphosphate = DNA(n+1) + diphosphate. Its function is as follows. DNA polymerase III is a complex, multichain enzyme responsible for most of the replicative synthesis in bacteria. This DNA polymerase also exhibits 3' to 5' exonuclease activity. Functionally, the exact function of the theta subunit is unknown. The protein is DNA polymerase III subunit theta (holE) of Escherichia coli O157:H7.